Here is a 448-residue protein sequence, read N- to C-terminus: Glucose-6-phosphate isomerase (448 aa).

The active-site Proton donor is the E290. Active-site residues include H311 and K425.

This sequence belongs to the GPI family.

It localises to the cytoplasm. The enzyme catalyses alpha-D-glucose 6-phosphate = beta-D-fructose 6-phosphate. It participates in carbohydrate biosynthesis; gluconeogenesis. Its pathway is carbohydrate degradation; glycolysis; D-glyceraldehyde 3-phosphate and glycerone phosphate from D-glucose: step 2/4. Functionally, catalyzes the reversible isomerization of glucose-6-phosphate to fructose-6-phosphate. The sequence is that of Glucose-6-phosphate isomerase from Levilactobacillus brevis (strain ATCC 367 / BCRC 12310 / CIP 105137 / JCM 1170 / LMG 11437 / NCIMB 947 / NCTC 947) (Lactobacillus brevis).